Consider the following 513-residue polypeptide: ATP synthase subunit alpha (513 aa).

Position 169–176 (169–176 (GDRQTGKT)) interacts with ATP.

This sequence belongs to the ATPase alpha/beta chains family. In terms of assembly, F-type ATPases have 2 components, CF(1) - the catalytic core - and CF(0) - the membrane proton channel. CF(1) has five subunits: alpha(3), beta(3), gamma(1), delta(1), epsilon(1). CF(0) has three main subunits: a(1), b(2) and c(9-12). The alpha and beta chains form an alternating ring which encloses part of the gamma chain. CF(1) is attached to CF(0) by a central stalk formed by the gamma and epsilon chains, while a peripheral stalk is formed by the delta and b chains.

The protein localises to the cell inner membrane. It catalyses the reaction ATP + H2O + 4 H(+)(in) = ADP + phosphate + 5 H(+)(out). Produces ATP from ADP in the presence of a proton gradient across the membrane. The alpha chain is a regulatory subunit. This Vesicomyosocius okutanii subsp. Calyptogena okutanii (strain HA) protein is ATP synthase subunit alpha.